A 357-amino-acid polypeptide reads, in one-letter code: tRNA N6-adenosine threonylcarbamoyltransferase (357 aa).

Residues His115 and His119 each contribute to the Fe cation site. Substrate-binding positions include 137–141 (LASGG), Asp170, Gly183, and Asn281. A Fe cation-binding site is contributed by Asp309.

It belongs to the KAE1 / TsaD family. It depends on Fe(2+) as a cofactor.

It localises to the cytoplasm. The enzyme catalyses L-threonylcarbamoyladenylate + adenosine(37) in tRNA = N(6)-L-threonylcarbamoyladenosine(37) in tRNA + AMP + H(+). Its function is as follows. Required for the formation of a threonylcarbamoyl group on adenosine at position 37 (t(6)A37) in tRNAs that read codons beginning with adenine. Is involved in the transfer of the threonylcarbamoyl moiety of threonylcarbamoyl-AMP (TC-AMP) to the N6 group of A37, together with TsaE and TsaB. TsaD likely plays a direct catalytic role in this reaction. This is tRNA N6-adenosine threonylcarbamoyltransferase from Bradyrhizobium diazoefficiens (strain JCM 10833 / BCRC 13528 / IAM 13628 / NBRC 14792 / USDA 110).